The chain runs to 493 residues: 2-amino-4-deoxychorismate synthase (493 aa).

This sequence belongs to the anthranilate synthase component I family. The cofactor is Mg(2+).

The enzyme catalyses (2S)-2-amino-4-deoxychorismate + L-glutamate = chorismate + L-glutamine. Functionally, converts chorismate to 2-amino-4-deoxychorismate (ADIC). Involved in the biosynthesis of the benzoxazolinate moiety of the enediyne antitumor antibiotic C-1027. The sequence is that of 2-amino-4-deoxychorismate synthase (sgcD) from Streptomyces globisporus.